The primary structure comprises 285 residues: MAEGDYNAVREAIADILDNDDYDDGSIGPVLVRLAWHASGTYDKATGTGGSNGATMRYMKEAKDEANNGLENARQFLEPIKAKFPWITYADLWTLAGVVAIEEMDGPKVPWKPGRQDYVDETNVPPNGRLPDGAQGQDHLRDIFYRMGFNDQEIVALCGAHNMGRCHMDRSGFEGAWVPNPIRFANTYFKLLMNEEWKLTTLKNGVKQYFNEDEELMMLPADYSLMQDPEFHKWVEIYAADKEKFFEDFSKVFAKLIELGVRRGPDGKAKTNFIDRNNNDPNPRL.

The active-site Proton acceptor is the histidine 37. Histidine 161 lines the heme b pocket. Catalysis depends on tryptophan 177, which acts as the Tryptophan radical intermediate.

Belongs to the peroxidase family. Cytochrome c peroxidase subfamily. In terms of assembly, forms a one-to-one complex with cytochrome c. Heme b is required as a cofactor.

It localises to the mitochondrion matrix. The protein resides in the mitochondrion intermembrane space. The catalysed reaction is 2 Fe(II)-[cytochrome c] + H2O2 + 2 H(+) = 2 Fe(III)-[cytochrome c] + 2 H2O. Its function is as follows. Destroys radicals which are normally produced within the cells and which are toxic to biological systems. The chain is Putative cytochrome c peroxidase, mitochondrial from Yarrowia lipolytica (strain CLIB 122 / E 150) (Yeast).